A 359-amino-acid polypeptide reads, in one-letter code: UPF0283 membrane protein R01807 (359 aa).

2 helical membrane passes run 76–96 (FGKI…GLWI) and 109–129 (WLGY…LIVV).

The protein belongs to the UPF0283 family.

The protein resides in the cell inner membrane. The chain is UPF0283 membrane protein R01807 from Rhizobium meliloti (strain 1021) (Ensifer meliloti).